The primary structure comprises 1551 residues: UDP-glucose:glycoprotein glucosyltransferase 1 (1551 aa).

The N-terminal stretch at 1 to 42 (MCSRGDANAAGAAAARRVTGLCYNMGLLIALALLCLFSLAEA) is a signal peptide. Asn269, Asn536, Asn1015, and Asn1228 each carry an N-linked (GlcNAc...) asparagine glycan. The interval 1244–1551 (KTEEVKQDKD…QEGSQKHEEL (308 aa)) is glucosyltransferase. Ser1277 carries the phosphoserine modification. Residues 1531-1551 (KELGTLHEEETQEGSQKHEEL) are disordered. A Prevents secretion from ER motif is present at residues 1548–1551 (HEEL).

The protein belongs to the glycosyltransferase 8 family. In terms of assembly, monomer as well as in a tight complex with SELENOF. Interacts with METTL23. Part of a large chaperone multiprotein complex comprising DNAJB11, HSP90B1, HSPA5, HYOU, PDIA2, PDIA4, PDIA6, PPIB, SDF2L1, UGGT1 and very small amounts of ERP29, but not, or at very low levels, CALR nor CANX. The cofactor is Ca(2+).

It localises to the endoplasmic reticulum lumen. Its subcellular location is the endoplasmic reticulum-Golgi intermediate compartment. The enzyme catalyses N(4)-(alpha-D-Man-(1-&gt;2)-alpha-D-Man-(1-&gt;2)-alpha-D-Man-(1-&gt;3)-[alpha-D-Man-(1-&gt;2)-alpha-D-Man-(1-&gt;3)-[alpha-D-Man-(1-&gt;2)-alpha-D-Man-(1-&gt;6)]-alpha-D-Man-(1-&gt;6)]-beta-D-Man-(1-&gt;4)-beta-D-GlcNAc-(1-&gt;4)-beta-D-GlcNAc)-L-asparaginyl-[protein] (N-glucan mannose isomer 9A1,2,3B1,2,3) + UDP-alpha-D-glucose = N(4)-(alpha-D-Glc-(1-&gt;3)-alpha-D-Man-(1-&gt;2)-alpha-D-Man-(1-&gt;2)-alpha-D-Man-(1-&gt;3)-[alpha-D-Man-(1-&gt;2)-alpha-D-Man-(1-&gt;3)-[alpha-D-Man-(1-&gt;2)-alpha-D-Man-(1-&gt;6)]-alpha-D-Man-(1-&gt;6)]-beta-D-Man-(1-&gt;4)-beta-D-GlcNAc-(1-&gt;4)-beta-D-GlcNAc)-L-asparaginyl-[protein] + UDP + H(+). Its pathway is protein modification; protein glycosylation. Its function is as follows. Recognizes glycoproteins with minor folding defects. Reglucosylates single N-glycans near the misfolded part of the protein, thus providing quality control for protein folding in the endoplasmic reticulum. Reglucosylated proteins are recognized by calreticulin for recycling to the endoplasmic reticulum and refolding or degradation. The polypeptide is UDP-glucose:glycoprotein glucosyltransferase 1 (Uggt1) (Rattus norvegicus (Rat)).